Reading from the N-terminus, the 355-residue chain is Probable nitronate monooxygenase (355 aa).

FMN contacts are provided by residues asparagine 71, glutamine 175, glycine 180, glycine 218, and glutamine 237 to threonine 240.

Belongs to the nitronate monooxygenase family. NMO class I subfamily. It depends on FMN as a cofactor.

It carries out the reaction 3 propionate 3-nitronate + 3 O2 + H2O = 3 3-oxopropanoate + 2 nitrate + nitrite + H2O2 + 3 H(+). Its function is as follows. Nitronate monooxygenase that uses molecular oxygen to catalyze the oxidative denitrification of alkyl nitronates. Acts on propionate 3-nitronate (P3N), the presumed physiological substrate. Probably functions in the detoxification of P3N, a metabolic poison produced by plants and fungi as a defense mechanism. The chain is Probable nitronate monooxygenase from Staphylococcus aureus (strain JH1).